The following is a 262-amino-acid chain: 1,2-epoxyphenylacetyl-CoA isomerase (262 aa).

It belongs to the enoyl-CoA hydratase/isomerase family.

It catalyses the reaction 2-(1,2-epoxy-1,2-dihydrophenyl)acetyl-CoA = 2-oxepin-2(3H)-ylideneacetyl-CoA. It participates in aromatic compound metabolism; phenylacetate degradation. Its function is as follows. Catalyzes the reversible conversion of the epoxide to 2-oxepin-2(3H)-ylideneacetyl-CoA (oxepin-CoA). The protein is 1,2-epoxyphenylacetyl-CoA isomerase (paaG) of Escherichia coli (strain K12).